We begin with the raw amino-acid sequence, 222 residues long: 7-cyano-7-deazaguanine synthase (222 aa).

7-17 (LSGGMDSAVAT) is a binding site for ATP. Zn(2+) is bound by residues Cys188, Cys196, Cys199, and Cys202.

It belongs to the QueC family. Zn(2+) serves as cofactor.

The catalysed reaction is 7-carboxy-7-deazaguanine + NH4(+) + ATP = 7-cyano-7-deazaguanine + ADP + phosphate + H2O + H(+). Its pathway is purine metabolism; 7-cyano-7-deazaguanine biosynthesis. In terms of biological role, catalyzes the ATP-dependent conversion of 7-carboxy-7-deazaguanine (CDG) to 7-cyano-7-deazaguanine (preQ(0)). The polypeptide is 7-cyano-7-deazaguanine synthase (Methanothermobacter thermautotrophicus (strain ATCC 29096 / DSM 1053 / JCM 10044 / NBRC 100330 / Delta H) (Methanobacterium thermoautotrophicum)).